The sequence spans 479 residues: Proline--tRNA ligase (479 aa).

Belongs to the class-II aminoacyl-tRNA synthetase family. ProS type 3 subfamily. In terms of assembly, homodimer.

It localises to the cytoplasm. It catalyses the reaction tRNA(Pro) + L-proline + ATP = L-prolyl-tRNA(Pro) + AMP + diphosphate. Its function is as follows. Catalyzes the attachment of proline to tRNA(Pro) in a two-step reaction: proline is first activated by ATP to form Pro-AMP and then transferred to the acceptor end of tRNA(Pro). This Lachnospira eligens (strain ATCC 27750 / DSM 3376 / VPI C15-48 / C15-B4) (Eubacterium eligens) protein is Proline--tRNA ligase.